Here is a 41-residue protein sequence, read N- to C-terminus: Large ribosomal subunit protein bL36 (41 aa).

This sequence belongs to the bacterial ribosomal protein bL36 family.

This chain is Large ribosomal subunit protein bL36, found in Sinorhizobium medicae (strain WSM419) (Ensifer medicae).